A 543-amino-acid chain; its full sequence is Thermosome subunit beta (543 aa).

The disordered stretch occupies residues 522 to 543 (TKSSSSSSNPPKSGSSSESSED). Positions 523–543 (KSSSSSSNPPKSGSSSESSED) are enriched in low complexity.

The protein belongs to the TCP-1 chaperonin family. As to quaternary structure, forms a Heterooligomeric complex of two stacked eight-membered rings. The N-terminus is blocked.

Functionally, molecular chaperone; binds unfolded polypeptides in vitro, and has a weak ATPase activity. The chain is Thermosome subunit beta (thsB) from Thermoplasma acidophilum (strain ATCC 25905 / DSM 1728 / JCM 9062 / NBRC 15155 / AMRC-C165).